The sequence spans 329 residues: Cardiolipin synthase (CMP-forming) (329 aa).

A mitochondrion-targeting transit peptide spans 1–34; it reads MPPSVATHASLLLKAAAAAAHLHPKPFFSPRAAP. A disordered region spans residues 27–55; sequence FFSPRAAPPRIPSAPAPPAAGGSRYRPTT. The span at 32–44 shows a compositional bias: pro residues; sequence AAPPRIPSAPAPP. 5 helical membrane passes run 134–154, 156–176, 194–214, 228–248, and 298–318; these read LLTL…LLIS, FYME…AAAV, FGAF…LVLL, PWLL…MSAV, and VTSG…SLVV. Over 319 to 329 the chain is Mitochondrial intermembrane; sequence YMRKIWRILLK.

Belongs to the CDP-alcohol phosphatidyltransferase class-I family. It depends on Mn(2+) as a cofactor.

The protein resides in the mitochondrion inner membrane. The enzyme catalyses a CDP-1,2-diacyl-sn-glycerol + a 1,2-diacyl-sn-glycero-3-phospho-(1'-sn-glycerol) = a cardiolipin + CMP + H(+). Catalyzes the synthesis of cardiolipin (CL) (diphosphatidylglycerol) by specifically transferring a phosphatidyl group from CDP-diacylglycerol to phosphatidylglycerol (PG). CL is a key phospholipid in mitochondrial membranes and plays important roles in maintaining the functional integrity and dynamics of mitochondria under both optimal and stress conditions. In Oryza sativa subsp. japonica (Rice), this protein is Cardiolipin synthase (CMP-forming).